The primary structure comprises 194 residues: MAIKLIVGLANPGAEYAATRHNAGAWYIDLLAERLRAPLREEPKFFGYTSRITLEGEDVRLLVPTTFMNLSGKAVGAMASFYRIQPDEILVAHDELDLPPGVAKFKLGGGHGGHNGLKDIISKLGNNPNFHRLRVGIGHPGDKNKVVGFVLGKPPVSEQKLIDEAIDEAARCTELWFKEGLAKATSRLHTFKAQ.

Tyr-16 lines the tRNA pocket. His-21 acts as the Proton acceptor in catalysis. Phe-67, Asn-69, and Asn-115 together coordinate tRNA.

It belongs to the PTH family. Monomer.

The protein resides in the cytoplasm. It carries out the reaction an N-acyl-L-alpha-aminoacyl-tRNA + H2O = an N-acyl-L-amino acid + a tRNA + H(+). Functionally, hydrolyzes ribosome-free peptidyl-tRNAs (with 1 or more amino acids incorporated), which drop off the ribosome during protein synthesis, or as a result of ribosome stalling. Its function is as follows. Catalyzes the release of premature peptidyl moieties from peptidyl-tRNA molecules trapped in stalled 50S ribosomal subunits, and thus maintains levels of free tRNAs and 50S ribosomes. In Salmonella paratyphi B (strain ATCC BAA-1250 / SPB7), this protein is Peptidyl-tRNA hydrolase.